Here is a 495-residue protein sequence, read N- to C-terminus: ATP synthase subunit beta, chloroplastic (495 aa).

Residue 172 to 179 coordinates ATP; it reads GGAGVGKT.

This sequence belongs to the ATPase alpha/beta chains family. As to quaternary structure, F-type ATPases have 2 components, CF(1) - the catalytic core - and CF(0) - the membrane proton channel. CF(1) has five subunits: alpha(3), beta(3), gamma(1), delta(1), epsilon(1). CF(0) has four main subunits: a(1), b(1), b'(1) and c(9-12).

The protein localises to the plastid. It is found in the chloroplast thylakoid membrane. It catalyses the reaction ATP + H2O + 4 H(+)(in) = ADP + phosphate + 5 H(+)(out). In terms of biological role, produces ATP from ADP in the presence of a proton gradient across the membrane. The catalytic sites are hosted primarily by the beta subunits. The protein is ATP synthase subunit beta, chloroplastic of Scilla messeniaca (Greek squill).